Here is a 358-residue protein sequence, read N- to C-terminus: Replication factor C subunit 5 (358 aa).

This sequence belongs to the activator 1 small subunits family. In terms of assembly, heteropentamer of subunits rfc1, rfc2, rfc3, rfc4 and rfc5 that forms a complex (RFC) with PCNA in the presence of ATP. Two other complexes exist where rfc1 can be replaced by either ctf18 or elg1 to form the ctf18-RFC or the elg1-RFC complexes respectively.

It is found in the nucleus. Its function is as follows. The elongation of primed DNA templates by DNA polymerase delta and epsilon requires the action of the accessory proteins PCNA and activator 1. This Schizosaccharomyces pombe (strain 972 / ATCC 24843) (Fission yeast) protein is Replication factor C subunit 5 (rfc5).